Reading from the N-terminus, the 606-residue chain is Pro-secreted protein ORF2 (606 aa).

Residues 1 to 19 form the signal peptide; sequence MSLCRLLLMLAMCCGVSRG. The disordered stretch occupies residues 22-54; it reads TLPAGGRRGQRRRDNSAQWSTQQRPEGAVGPAP. A Nuclear localization signal motif is present at residues 28 to 34; sequence RRGQRRR. A glycan (N-linked (GlcNAc...) asparagine; by host) is linked at N255. A particle formation region spans residues 313-339; it reads ILGVLFNLADTVLGGLPSTLLRAASGQ. N-linked (GlcNAc...) asparagine; by host glycosylation occurs at N510.

Belongs to the hepevirus capsid protein family. In terms of assembly, homodimer. Self-assembles to form the capsid. The capsid is dominated by dimers that define the 30 morphological units. Interacts with phosphorylated protein ORF3. N-glycosylated.

Its subcellular location is the secreted. It localises to the virion. It is found in the host cytoplasm. The protein resides in the host endoplasmic reticulum. The protein localises to the host Golgi apparatus. Its subcellular location is the host cell surface. It localises to the host nucleus. Functionally, plays a role in the inhibition of host antibody-mediated neutralization without blocking viral cell entry. Its function is as follows. Forms an icosahedral capsid with a T=1 symmetry and a 34 nm diameter. The capsid is composed of 60 copies linked to each other. Binds to the 5' end of the genomic RNA to mediate genome encapsidation. The protein is Pro-secreted protein ORF2 of Gallus gallus (Chicken).